The chain runs to 309 residues: N(5)-(carboxyethyl)ornithine synthase (309 aa).

R15, K71, and H92 together coordinate pyruvate. 171–176 lines the NADP(+) pocket; the sequence is GSGNVA.

The protein belongs to the AlaDH/PNT family. CEOS subfamily. In terms of assembly, homotetramer.

The enzyme catalyses N(5)-[1(S)-1-carboxyethyl]-L-ornithine + NADP(+) + H2O = L-ornithine + pyruvate + NADPH + H(+). Functionally, catalyzes the NADPH-dependent reductive condensation between pyruvic acid and the side chain amino group of L-ornithine to form N(5)-(L-1-carboxyethyl)-L-ornithine. To a lesser extent, can also use L-lysine as substrate (yielding N(6)-(L-1-carboxyethyl)-L-lysine). This Lactococcus lactis subsp. lactis (strain IL1403) (Streptococcus lactis) protein is N(5)-(carboxyethyl)ornithine synthase (ceo).